Consider the following 148-residue polypeptide: Arginine repressor (148 aa).

The protein belongs to the ArgR family.

It localises to the cytoplasm. Its pathway is amino-acid biosynthesis; L-arginine biosynthesis [regulation]. In terms of biological role, regulates arginine biosynthesis genes. The polypeptide is Arginine repressor (Chlorobium phaeobacteroides (strain BS1)).